A 183-amino-acid polypeptide reads, in one-letter code: Oligoribonuclease (183 aa).

Residues 8 to 171 form the Exonuclease domain; the sequence is LIWIDLEMTG…DDIRDSIHEL (164 aa). Tyr129 is a catalytic residue.

Belongs to the oligoribonuclease family.

Its subcellular location is the cytoplasm. In terms of biological role, 3'-to-5' exoribonuclease specific for small oligoribonucleotides. This chain is Oligoribonuclease, found in Halorhodospira halophila (strain DSM 244 / SL1) (Ectothiorhodospira halophila (strain DSM 244 / SL1)).